The chain runs to 31 residues: Cytochrome b6-f complex subunit 6 (31 aa).

Residues 4-26 (ITSYFGFLLAASTITSALLIGLS) form a helical membrane-spanning segment.

Belongs to the PetL family. In terms of assembly, the 4 large subunits of the cytochrome b6-f complex are cytochrome b6, subunit IV (17 kDa polypeptide, PetD), cytochrome f and the Rieske protein, while the 4 small subunits are PetG, PetL, PetM and PetN. The complex functions as a dimer.

Its subcellular location is the plastid. It is found in the chloroplast thylakoid membrane. Functionally, component of the cytochrome b6-f complex, which mediates electron transfer between photosystem II (PSII) and photosystem I (PSI), cyclic electron flow around PSI, and state transitions. PetL is important for photoautotrophic growth as well as for electron transfer efficiency and stability of the cytochrome b6-f complex. The sequence is that of Cytochrome b6-f complex subunit 6 from Chloranthus spicatus (Chulantree).